Here is a 203-residue protein sequence, read N- to C-terminus: Ribonuclease HII (203 aa).

The region spanning Gly18–Ala203 is the RNase H type-2 domain. Residues Asp24, Glu25, and Asp116 each contribute to the a divalent metal cation site.

The protein belongs to the RNase HII family. It depends on Mn(2+) as a cofactor. Mg(2+) is required as a cofactor.

The protein resides in the cytoplasm. The enzyme catalyses Endonucleolytic cleavage to 5'-phosphomonoester.. Endonuclease that specifically degrades the RNA of RNA-DNA hybrids. This chain is Ribonuclease HII, found in Shewanella halifaxensis (strain HAW-EB4).